The following is a 137-amino-acid chain: Large ribosomal subunit protein bL12 (137 aa).

The protein belongs to the bacterial ribosomal protein bL12 family. As to quaternary structure, homodimer. Part of the ribosomal stalk of the 50S ribosomal subunit. Forms a multimeric L10(L12)X complex, where L10 forms an elongated spine to which 2 to 4 L12 dimers bind in a sequential fashion. Binds GTP-bound translation factors.

Its function is as follows. Forms part of the ribosomal stalk which helps the ribosome interact with GTP-bound translation factors. Is thus essential for accurate translation. This is Large ribosomal subunit protein bL12 from Synechococcus sp. (strain JA-3-3Ab) (Cyanobacteria bacterium Yellowstone A-Prime).